The following is a 157-amino-acid chain: 3-dehydroquinate dehydratase (157 aa).

Residue Y22 is the Proton acceptor of the active site. Positions 73, 79, and 86 each coordinate substrate. The Proton donor role is filled by H99. Substrate contacts are provided by residues 100–101 and R110; that span reads LS.

Belongs to the type-II 3-dehydroquinase family. In terms of assembly, homododecamer.

It carries out the reaction 3-dehydroquinate = 3-dehydroshikimate + H2O. The protein operates within metabolic intermediate biosynthesis; chorismate biosynthesis; chorismate from D-erythrose 4-phosphate and phosphoenolpyruvate: step 3/7. Its function is as follows. Catalyzes a trans-dehydration via an enolate intermediate. This is 3-dehydroquinate dehydratase from Roseiflexus castenholzii (strain DSM 13941 / HLO8).